The primary structure comprises 458 residues: RuvB-like helicase 1 (458 aa).

A compositionally biased stretch (basic and acidic residues) spans M1–T18. Positions M1–A20 are disordered. G73–T80 is a binding site for ATP.

The protein belongs to the RuvB family. May form heterododecamers with RVB2. Component of the SWR1 chromatin remodeling complex, the INO80 chromatin remodeling complex, and of the R2TP complex.

The protein localises to the nucleus. It carries out the reaction ATP + H2O = ADP + phosphate + H(+). In terms of biological role, DNA helicase which participates in several chromatin remodeling complexes, including the SWR1 and the INO80 complexes. The SWR1 complex mediates the ATP-dependent exchange of histone H2A for the H2A variant HZT1 leading to transcriptional regulation of selected genes by chromatin remodeling. The INO80 complex remodels chromatin by shifting nucleosomes and is involved in DNA repair. Also involved in pre-rRNA processing. The chain is RuvB-like helicase 1 (RVB1) from Candida albicans (strain SC5314 / ATCC MYA-2876) (Yeast).